A 969-amino-acid chain; its full sequence is RNA polymerase-associated protein RapA (969 aa).

A Helicase ATP-binding domain is found at 162 to 339; sequence EVGQRVAPRV…FARLALLDAD (178 aa). 175-182 lines the ATP pocket; the sequence is DEVGLGKT. A DEAH box motif is present at residues 285-288; sequence DEAH. The Helicase C-terminal domain occupies 492–663; sequence RIEWLITFLK…GFLKNPQAVG (172 aa).

This sequence belongs to the SNF2/RAD54 helicase family. RapA subfamily. Interacts with the RNAP. Has a higher affinity for the core RNAP than for the holoenzyme. Its ATPase activity is stimulated by binding to RNAP.

Transcription regulator that activates transcription by stimulating RNA polymerase (RNAP) recycling in case of stress conditions such as supercoiled DNA or high salt concentrations. Probably acts by releasing the RNAP, when it is trapped or immobilized on tightly supercoiled DNA. Does not activate transcription on linear DNA. Probably not involved in DNA repair. The chain is RNA polymerase-associated protein RapA from Actinobacillus pleuropneumoniae serotype 5b (strain L20).